A 101-amino-acid polypeptide reads, in one-letter code: Small ribosomal subunit protein uS14 (101 aa).

It belongs to the universal ribosomal protein uS14 family. As to quaternary structure, part of the 30S ribosomal subunit. Contacts proteins S3 and S10.

In terms of biological role, binds 16S rRNA, required for the assembly of 30S particles and may also be responsible for determining the conformation of the 16S rRNA at the A site. The protein is Small ribosomal subunit protein uS14 of Orientia tsutsugamushi (strain Ikeda) (Rickettsia tsutsugamushi).